The sequence spans 393 residues: Thermostable carboxypeptidase 1 (393 aa).

3 residues coordinate Zn(2+): histidine 104, aspartate 109, and histidine 245. Tyrosine 302 functions as the Proton donor in the catalytic mechanism. Glutamate 373 functions as the Nucleophile in the catalytic mechanism.

This sequence belongs to the peptidase M20 family. Homotetramer. It depends on Zn(2+) as a cofactor.

Functionally, can release basic, acidic, aromatic, and, to a lesser extent, aliphatic amino acids. This is Thermostable carboxypeptidase 1 (cpsA1) from Saccharolobus solfataricus (strain ATCC 35092 / DSM 1617 / JCM 11322 / P2) (Sulfolobus solfataricus).